We begin with the raw amino-acid sequence, 201 residues long: CDP-diacylglycerol--serine O-phosphatidyltransferase (201 aa).

The next 6 helical transmembrane spans lie at Ile19 to Ile39, Phe57 to Leu77, Leu88 to Leu108, Gly112 to Ile132, Asn133 to Ile153, and Ile162 to Ala182.

The protein belongs to the CDP-alcohol phosphatidyltransferase class-I family.

The protein localises to the cell membrane. It carries out the reaction a CDP-1,2-diacyl-sn-glycerol + L-serine = a 1,2-diacyl-sn-glycero-3-phospho-L-serine + CMP + H(+). The sequence is that of CDP-diacylglycerol--serine O-phosphatidyltransferase (pssA) from Methanocaldococcus jannaschii (strain ATCC 43067 / DSM 2661 / JAL-1 / JCM 10045 / NBRC 100440) (Methanococcus jannaschii).